A 281-amino-acid chain; its full sequence is Bifunctional protein FolD (281 aa).

Residues 165–167 (GRG), threonine 192, and valine 233 each bind NADP(+).

Belongs to the tetrahydrofolate dehydrogenase/cyclohydrolase family. In terms of assembly, homodimer.

The enzyme catalyses (6R)-5,10-methylene-5,6,7,8-tetrahydrofolate + NADP(+) = (6R)-5,10-methenyltetrahydrofolate + NADPH. It carries out the reaction (6R)-5,10-methenyltetrahydrofolate + H2O = (6R)-10-formyltetrahydrofolate + H(+). The protein operates within one-carbon metabolism; tetrahydrofolate interconversion. Functionally, catalyzes the oxidation of 5,10-methylenetetrahydrofolate to 5,10-methenyltetrahydrofolate and then the hydrolysis of 5,10-methenyltetrahydrofolate to 10-formyltetrahydrofolate. The chain is Bifunctional protein FolD from Mycobacterium bovis (strain BCG / Tokyo 172 / ATCC 35737 / TMC 1019).